The sequence spans 87 residues: Asparagine--tRNA ligase, cytoplasmic (87 aa).

It belongs to the class-II aminoacyl-tRNA synthetase family.

It localises to the cytoplasm. The enzyme catalyses tRNA(Asn) + L-asparagine + ATP = L-asparaginyl-tRNA(Asn) + AMP + diphosphate + H(+). This Saccharomyces paradoxus (Yeast) protein is Asparagine--tRNA ligase, cytoplasmic (DED81).